We begin with the raw amino-acid sequence, 264 residues long: 3-methyl-2-oxobutanoate hydroxymethyltransferase (264 aa).

The Mg(2+) site is built by Asp45 and Asp84. Residues 45 to 46 (DS), Asp84, and Lys112 contribute to the 3-methyl-2-oxobutanoate site. Glu114 is a binding site for Mg(2+). Glu181 (proton acceptor) is an active-site residue.

It belongs to the PanB family. In terms of assembly, homodecamer; pentamer of dimers. Mg(2+) is required as a cofactor.

It is found in the cytoplasm. The catalysed reaction is 3-methyl-2-oxobutanoate + (6R)-5,10-methylene-5,6,7,8-tetrahydrofolate + H2O = 2-dehydropantoate + (6S)-5,6,7,8-tetrahydrofolate. The protein operates within cofactor biosynthesis; (R)-pantothenate biosynthesis; (R)-pantoate from 3-methyl-2-oxobutanoate: step 1/2. Catalyzes the reversible reaction in which hydroxymethyl group from 5,10-methylenetetrahydrofolate is transferred onto alpha-ketoisovalerate to form ketopantoate. The protein is 3-methyl-2-oxobutanoate hydroxymethyltransferase of Shigella dysenteriae serotype 1 (strain Sd197).